A 305-amino-acid polypeptide reads, in one-letter code: Methionyl-tRNA formyltransferase (305 aa).

111–114 (SLLP) is a binding site for (6S)-5,6,7,8-tetrahydrofolate.

Belongs to the Fmt family.

It carries out the reaction L-methionyl-tRNA(fMet) + (6R)-10-formyltetrahydrofolate = N-formyl-L-methionyl-tRNA(fMet) + (6S)-5,6,7,8-tetrahydrofolate + H(+). Its function is as follows. Attaches a formyl group to the free amino group of methionyl-tRNA(fMet). The formyl group appears to play a dual role in the initiator identity of N-formylmethionyl-tRNA by promoting its recognition by IF2 and preventing the misappropriation of this tRNA by the elongation apparatus. The protein is Methionyl-tRNA formyltransferase of Helicobacter pylori (strain P12).